A 974-amino-acid chain; its full sequence is MNQFDSALHQGTPGVSVLDNRGHVIRELRYYRHPDTPQEIAERIAFHQYDSYGFISQSIDPRLAERRKQDSSVKPNLSYFTALSGEVLRTDGVDAGTIFSLNDIAARPAISISATGVSHTWQYEGENRPGRVLSRSEREKDREERIIERFYWAGSDASQKANNLAGQCLRHYNSAGLNQTLSIALTGTPISACFQPLLESAEPEWQGTNESAWLELLTPEIFTTYNRADANGETLVQTDAMGNIQRLAYDVAGFLKSSWLSLKGGQEQIIVKSLTYSAAGQKLQEEHGNGVLTTYSYEAETQRLIGIRTERPAGHLSGARVFQDLRYTYDPVGNVLRITNDAEATRFWRNQKVVPENTYIYDTLYQLVSANGREMANIPQQSSQLPTLSPIDNNAYTNYIRNYHYDSAGNLMQIRHTSAAANNSYTTNITVSKYSNRAVLSSLTDDVDKVEAFFDAAGRQNQLLPGQTLSWNARGELAKVTPVARDGQESDSETYRYDANSQRVSKMAIQQSNNNTQTRRVLYLAGLERRTIHQGNTLFETLLVVKIGEAGRAQVQAMHWELGQPTEVANDELRYSYDNLIGSSGLEVDGTGQLISQEEYYPYGGTAVWMARSQREASDKAYGYSGKERDATGLYYYGFRYYQPWAGRWLSADPAGTIDGLNLFRMVRNNPIVLHDPDGLAPGFFERISSFRKKDTLTISSLKGTGPFYTRSESEIDIDFLFSRQDRDKDFPPQNHKELSAEDRREVLEVSSGENITSANKSSKWYAGTHWETKPLKNNTDLVVLHNGVQGAAGININLNDIKPGRSVLVTAGTLTGCTMITGVKGNNFYALHAGTGTPSENWVTGEHGVTDNFRMLNKLIPDAGIDLNPEAVNDSLLTILDYFDNGTIAYNGKKGSEIHRDADNILNYRTTGYENTVGVSFSLLTKDKNGEVSASTLLELGELKPHKKHRTRGQFGMTELKYEARKNTVVKLR.

RHS repeat units lie at residues 165 to 179, 290 to 304, 322 to 336, 354 to 368, 398 to 412, 490 to 504, 570 to 584, 596 to 610, and 630 to 644; these read AGQCLRHYNSAGLNQ, GVLTTYSYEAETQRL, FQDLRYTYDPVGNVL, VPENTYIYDTLYQLV, NYIRNYHYDSAGNLM, SDSETYRYDANSQRV, NDELRYSYDNLIGSS, SQEEYYPYGGTAVWM, and DATGLYYYGFRYYQP. The segment at 600–680 is RHS-repeat associated core domain; that stretch reads YYPYGGTAVW…PIVLHDPDGL (81 aa). The segment at 699 to 940 is cytotoxic necrotising factor domain; that stretch reads ISSLKGTGPF…GEVSASTLLE (242 aa).

This sequence belongs to the RHS family. In terms of assembly, semipurified toxin complex consists of at least YenA1-YenA2-YenB-YenC1-YenC2-Chi1-Chi2. The Yen-TC:K9 subcomplex is about 26 nm tall and 22 nm in diameter with 5-fold symmetry and 5 copies of YenA1, YenA2, Chi1 and Chi2; the chitinase subunits may be solvent accessible on the exterior the complex. The Yen-TC:K9 subcomplex has no insecticidal activity. The native complex with additional YenB, YenC1 and YenC2 subunits is 16 nm taller and is insecticidal; the toxicity-conferring subunits are present at about 1 copy each.

It is found in the secreted. Toxin complex is secreted when grown at 25 degrees Celsius or less; at higher temperatures the proteins are present intracellularly but not secreted. Its function is as follows. Part of an orally active toxin complex (TC) with strong insecticidal effects on larvae of the Coleoptera Costelytra zealandica, Acrossidius tasmania and Adoryphorus couloni and some Lepidoptera larvae. The TC has an endochitinase activity. The sequence is that of Toxin subunit YenC1 from Yersinia entomophaga.